Reading from the N-terminus, the 340-residue chain is GTP 3',8-cyclase (340 aa).

One can recognise a Radical SAM core domain in the interval Arg20–Lys246. Residue Arg29 coordinates GTP. [4Fe-4S] cluster is bound by residues Cys36 and Cys40. Residue Tyr42 participates in S-adenosyl-L-methionine binding. Cys43 serves as a coordination point for [4Fe-4S] cluster. Residue Arg79 participates in GTP binding. Position 83 (Gly83) interacts with S-adenosyl-L-methionine. Thr110 lines the GTP pocket. S-adenosyl-L-methionine is bound at residue Ser134. Lys171 contacts GTP. Met205 contacts S-adenosyl-L-methionine. Residues Cys268 and Cys271 each contribute to the [4Fe-4S] cluster site. Arg273 to Arg275 provides a ligand contact to GTP. Residue Cys285 participates in [4Fe-4S] cluster binding.

Belongs to the radical SAM superfamily. MoaA family. Monomer and homodimer. Requires [4Fe-4S] cluster as cofactor.

The catalysed reaction is GTP + AH2 + S-adenosyl-L-methionine = (8S)-3',8-cyclo-7,8-dihydroguanosine 5'-triphosphate + 5'-deoxyadenosine + L-methionine + A + H(+). The protein operates within cofactor biosynthesis; molybdopterin biosynthesis. In terms of biological role, catalyzes the cyclization of GTP to (8S)-3',8-cyclo-7,8-dihydroguanosine 5'-triphosphate. The protein is GTP 3',8-cyclase of Actinobacillus pleuropneumoniae serotype 7 (strain AP76).